The following is a 103-amino-acid chain: Large ribosomal subunit protein bL21 (103 aa).

This sequence belongs to the bacterial ribosomal protein bL21 family. As to quaternary structure, part of the 50S ribosomal subunit. Contacts protein L20.

In terms of biological role, this protein binds to 23S rRNA in the presence of protein L20. The chain is Large ribosomal subunit protein bL21 from Clostridium perfringens (strain ATCC 13124 / DSM 756 / JCM 1290 / NCIMB 6125 / NCTC 8237 / Type A).